Here is a 638-residue protein sequence, read N- to C-terminus: Threonine--tRNA ligase (638 aa).

The TGS domain maps to 1-61 (MPKITLPDGT…KNDSKVVIIT (61 aa)). Residues 242–533 (DHRKLGKKHS…LIEQYEAKFP (292 aa)) are catalytic. Zn(2+)-binding residues include C333, H384, and H510.

The protein belongs to the class-II aminoacyl-tRNA synthetase family. In terms of assembly, homodimer. The cofactor is Zn(2+).

It localises to the cytoplasm. The catalysed reaction is tRNA(Thr) + L-threonine + ATP = L-threonyl-tRNA(Thr) + AMP + diphosphate + H(+). Its function is as follows. Catalyzes the attachment of threonine to tRNA(Thr) in a two-step reaction: L-threonine is first activated by ATP to form Thr-AMP and then transferred to the acceptor end of tRNA(Thr). Also edits incorrectly charged L-seryl-tRNA(Thr). The protein is Threonine--tRNA ligase of Prochlorococcus marinus (strain MIT 9515).